Here is a 506-residue protein sequence, read N- to C-terminus: Maturase K (506 aa).

It belongs to the intron maturase 2 family. MatK subfamily.

The protein localises to the plastid. The protein resides in the chloroplast. Its function is as follows. Usually encoded in the trnK tRNA gene intron. Probably assists in splicing its own and other chloroplast group II introns. In Rhododendron ferrugineum (Alpenrose), this protein is Maturase K.